A 267-amino-acid polypeptide reads, in one-letter code: MSAMDVMIHSSSFLLPCDETSTGTRYALVVLNQSLPRFTPLLWEHAKLRLCADGGANRIYDELPLFFPNEDALAIRNRYKPDVIKGDMDSIRRDVLDFYINLGTKVIDESHDQDTTDLDKCILYIRHSTLNQETSGLQILATGALGGRFDHEAGNLNVLYRYPDTRIVLLSDDCLIQLLPKTHRHEIHIQSSLEGPHCGLIPIGTPSAKTTTSGLQWDLSNTEMRFGGLISTSNLVKEEKITVESDSDLLWTISIKKTGLSIQDHTP.

Belongs to the thiamine pyrophosphokinase family. In terms of tissue distribution, expressed in roots, leaves and flowers.

It is found in the cytoplasm. The protein localises to the cytosol. The enzyme catalyses thiamine + ATP = thiamine diphosphate + AMP + H(+). The protein operates within cofactor biosynthesis; thiamine diphosphate biosynthesis; thiamine diphosphate from thiamine: step 1/1. Functionally, catalyzes the phosphorylation of thiamine to thiamine pyrophosphate (TPP). TPP is an active cofactor for enzymes involved in glycolysis and energy production. Plant leaves require high levels of TPP for photosynthesis and carbohydrate metabolism. This Arabidopsis thaliana (Mouse-ear cress) protein is Thiamine pyrophosphokinase 1.